A 364-amino-acid polypeptide reads, in one-letter code: DNA polymerase IV (364 aa).

The UmuC domain occupies 6–194 (VFHIDFDYFY…LKIRDIPGIG (189 aa)). 2 residues coordinate Mg(2+): D10 and D111. Residue E112 is part of the active site.

The protein belongs to the DNA polymerase type-Y family. As to quaternary structure, monomer. It depends on Mg(2+) as a cofactor.

It is found in the cytoplasm. It catalyses the reaction DNA(n) + a 2'-deoxyribonucleoside 5'-triphosphate = DNA(n+1) + diphosphate. Poorly processive, error-prone DNA polymerase involved in untargeted mutagenesis. Copies undamaged DNA at stalled replication forks, which arise in vivo from mismatched or misaligned primer ends. These misaligned primers can be extended by PolIV. Exhibits no 3'-5' exonuclease (proofreading) activity. May be involved in translesional synthesis. The sequence is that of DNA polymerase IV from Nitrosopumilus maritimus (strain SCM1).